We begin with the raw amino-acid sequence, 92 residues long: Small ribosomal subunit protein uS19 (92 aa).

The protein belongs to the universal ribosomal protein uS19 family.

In terms of biological role, protein S19 forms a complex with S13 that binds strongly to the 16S ribosomal RNA. In Brucella anthropi (strain ATCC 49188 / DSM 6882 / CCUG 24695 / JCM 21032 / LMG 3331 / NBRC 15819 / NCTC 12168 / Alc 37) (Ochrobactrum anthropi), this protein is Small ribosomal subunit protein uS19.